The chain runs to 582 residues: Potassium-transporting ATPase potassium-binding subunit (582 aa).

11 consecutive transmembrane segments (helical) span residues 6-26, 65-85, 87-107, 136-156, 178-198, 277-297, 304-324, 402-422, 441-461, 505-525, and 546-566; these read LVQL…LGLY, IYAL…YVLE, LQGG…FVAV, GLAV…VALI, VLYI…WQGV, LEML…GVMI, LAIL…TLAA, GLYG…LMVG, ALVI…AAVI, IAGA…VLAL, and GGIF…LTFV.

Belongs to the KdpA family. As to quaternary structure, the system is composed of three essential subunits: KdpA, KdpB and KdpC.

The protein resides in the cell inner membrane. In terms of biological role, part of the high-affinity ATP-driven potassium transport (or Kdp) system, which catalyzes the hydrolysis of ATP coupled with the electrogenic transport of potassium into the cytoplasm. This subunit binds the periplasmic potassium ions and delivers the ions to the membrane domain of KdpB through an intramembrane tunnel. This chain is Potassium-transporting ATPase potassium-binding subunit, found in Solidesulfovibrio magneticus (strain ATCC 700980 / DSM 13731 / RS-1) (Desulfovibrio magneticus).